Consider the following 179-residue polypeptide: UPF0227 protein VS_2073 (179 aa).

Belongs to the UPF0227 family.

The sequence is that of UPF0227 protein VS_2073 from Vibrio atlanticus (strain LGP32) (Vibrio splendidus (strain Mel32)).